We begin with the raw amino-acid sequence, 437 residues long: tRNA-2-methylthio-N(6)-dimethylallyladenosine synthase (437 aa).

Positions 1 to 117 (MKFYIKTFGC…LPNLLEEAKS (117 aa)) constitute an MTTase N-terminal domain. Positions 10, 46, 80, 156, 160, and 163 each coordinate [4Fe-4S] cluster. Residues 142 to 371 (RENKYTAFVT…INLQKDITFK (230 aa)) enclose the Radical SAM core domain. A TRAM domain is found at 374–435 (LEYQDKIVEI…RFSLEGSIIG (62 aa)).

The protein belongs to the methylthiotransferase family. MiaB subfamily. In terms of assembly, monomer. It depends on [4Fe-4S] cluster as a cofactor.

Its subcellular location is the cytoplasm. It carries out the reaction N(6)-dimethylallyladenosine(37) in tRNA + (sulfur carrier)-SH + AH2 + 2 S-adenosyl-L-methionine = 2-methylsulfanyl-N(6)-dimethylallyladenosine(37) in tRNA + (sulfur carrier)-H + 5'-deoxyadenosine + L-methionine + A + S-adenosyl-L-homocysteine + 2 H(+). Catalyzes the methylthiolation of N6-(dimethylallyl)adenosine (i(6)A), leading to the formation of 2-methylthio-N6-(dimethylallyl)adenosine (ms(2)i(6)A) at position 37 in tRNAs that read codons beginning with uridine. This chain is tRNA-2-methylthio-N(6)-dimethylallyladenosine synthase, found in Sulfurihydrogenibium sp. (strain YO3AOP1).